The following is a 356-amino-acid chain: N-acyl-phosphatidylethanolamine-hydrolyzing phospholipase D 1 (356 aa).

Residues histidine 144 and histidine 146 each coordinate Zn(2+). Tyrosine 147 serves as a coordination point for an N-acyl-1,2-diacyl-sn-glycero-3-phosphoethanolamine. Zn(2+)-binding residues include aspartate 148, histidine 149, histidine 217, and aspartate 248. Histidine 286 serves as a coordination point for an N-acyl-1,2-diacyl-sn-glycero-3-phosphoethanolamine. A Zn(2+)-binding site is contributed by histidine 308.

Belongs to the NAPE-PLD family. Zn(2+) serves as cofactor. In terms of tissue distribution, expressed in interneurons that are in close proximity to the primary sensory neurons. Predominantly expressed in the pharynx but can also be found in cell bodies of the dorsal and ventral nerve cords.

The catalysed reaction is an N-acyl-1,2-diacyl-sn-glycero-3-phosphoethanolamine + H2O = an N-acylethanolamine + a 1,2-diacyl-sn-glycero-3-phosphate + H(+). It catalyses the reaction 1,2-dihexadecanoyl-sn-glycero-3-phospho-(N-hexadecanoyl)-ethanolamine + H2O = 1,2-dihexadecanoyl-sn-glycero-3-phosphate + N-hexadecanoylethanolamine + H(+). The enzyme catalyses N-(5Z,8Z,11Z,14Z-eicosatetraenoyl)-1,2-di-(9Z-octadecenoyl)-sn-glycero-3-phosphoethanolamine + H2O = N-(5Z,8Z,11Z,14Z-eicosatetraenoyl)-ethanolamine + 1,2-di-(9Z-octadecenoyl)-sn-glycero-3-phosphate + H(+). Its function is as follows. D-type phospholipase that hydrolyzes N-acyl-phosphatidylethanolamines (NAPEs) to produce bioactive N-acylethanolamines/fatty acid ethanolamides (NAEs/FAEs) and phosphatidic acid. NAEs are bioactive lipids that are involved in diverse physiological processes such as growth and lifespan. This is N-acyl-phosphatidylethanolamine-hydrolyzing phospholipase D 1 from Caenorhabditis elegans.